A 288-amino-acid polypeptide reads, in one-letter code: MRIRVPATTANLGPGFDSCGLALTLYLTLDIGAEADSWYIEHNIGGGIPHDETNVIIETALNLAPNLTPHHLVMTCDIPPARGLGSSSAAVVAGIELANTLAELNLSKEEKVRIAAEIEGHPDNVAPAVLGNWVVGAKLDGEDFYVRHLFPDCALIAFIPKAELLTSESRGVLPDTLPFKEAVQASSIANVMIAAILRNDMTLAGEMMERDLWHEKYRSQLVPHLTQIRDVAKSQGAYAACLSGAGPTVLVFAPRNLANKLQTSLQTLEIDADVLLLDVEGSGAEVFR.

79-89 (PPARGLGSSSA) serves as a coordination point for ATP.

Belongs to the GHMP kinase family. Homoserine kinase subfamily.

The protein resides in the cytoplasm. The catalysed reaction is L-homoserine + ATP = O-phospho-L-homoserine + ADP + H(+). The protein operates within amino-acid biosynthesis; L-threonine biosynthesis; L-threonine from L-aspartate: step 4/5. Catalyzes the ATP-dependent phosphorylation of L-homoserine to L-homoserine phosphate. In Listeria monocytogenes serotype 4a (strain HCC23), this protein is Homoserine kinase.